The sequence spans 264 residues: Thymidylate synthase (264 aa).

Arginine 21 lines the dUMP pocket. Residue histidine 51 participates in (6R)-5,10-methylene-5,6,7,8-tetrahydrofolate binding. 126–127 is a dUMP binding site; that stretch reads RR. The active-site Nucleophile is cysteine 146. DUMP contacts are provided by residues 166 to 169, asparagine 177, and 207 to 209; these read RSCD and HLY. (6R)-5,10-methylene-5,6,7,8-tetrahydrofolate is bound at residue aspartate 169. Residue alanine 263 participates in (6R)-5,10-methylene-5,6,7,8-tetrahydrofolate binding.

This sequence belongs to the thymidylate synthase family. Bacterial-type ThyA subfamily. As to quaternary structure, homodimer.

Its subcellular location is the cytoplasm. It catalyses the reaction dUMP + (6R)-5,10-methylene-5,6,7,8-tetrahydrofolate = 7,8-dihydrofolate + dTMP. Its pathway is pyrimidine metabolism; dTTP biosynthesis. Its function is as follows. Catalyzes the reductive methylation of 2'-deoxyuridine-5'-monophosphate (dUMP) to 2'-deoxythymidine-5'-monophosphate (dTMP) while utilizing 5,10-methylenetetrahydrofolate (mTHF) as the methyl donor and reductant in the reaction, yielding dihydrofolate (DHF) as a by-product. This enzymatic reaction provides an intracellular de novo source of dTMP, an essential precursor for DNA biosynthesis. The protein is Thymidylate synthase of Yersinia pseudotuberculosis serotype O:1b (strain IP 31758).